Reading from the N-terminus, the 493-residue chain is ATP-dependent rRNA helicase RRP3 (493 aa).

Basic and acidic residues-rich tracts occupy residues 26 to 42 (ALEN…KDSE) and 51 to 62 (ERPAKKQAKDEK). The tract at residues 26-68 (ALENQKKMQAASRKDSESDSSDEEVERPAKKQAKDEKVEEPEE) is disordered. The Q motif motif lies at 73 to 101 (ESFAQLNLVPELIQACQNLNFTKPTPIQA). Residues 104–276 (IPPALAGSDV…RASLTNPVKC (173 aa)) enclose the Helicase ATP-binding domain. 117 to 124 (AQTGSGKT) contacts ATP. The DEAD box motif lies at 223-226 (DEAD). Positions 307–453 (LLNEFIGKTV…NIILTLRDSV (147 aa)) constitute a Helicase C-terminal domain. The disordered stretch occupies residues 467–493 (RNKEKQARGKGRRGRMMAKENMDREEK). The segment covering 483–493 (MAKENMDREEK) has biased composition (basic and acidic residues).

This sequence belongs to the DEAD box helicase family. DDX47/RRP3 subfamily. In terms of assembly, interacts with the SSU processome.

The protein localises to the nucleus. It carries out the reaction ATP + H2O = ADP + phosphate + H(+). Functionally, ATP-dependent rRNA helicase required for pre-ribosomal RNA processing. Involved in the maturation of the 35S-pre-rRNA and to its cleavage to mature 18S rRNA. This Candida glabrata (strain ATCC 2001 / BCRC 20586 / JCM 3761 / NBRC 0622 / NRRL Y-65 / CBS 138) (Yeast) protein is ATP-dependent rRNA helicase RRP3.